The chain runs to 95 residues: MTLLSFGFSPVFFSVMAFCIISRSKFYPQRTRNKVIVLILLTFFICFLYPLTKVYLVGSYGIFDKFYLFCFISTLIAIAINVVILTINGAKNERN.

3 helical membrane passes run 1 to 21 (MTLL…FCII), 35 to 55 (VIVL…TKVY), and 67 to 87 (YLFC…ILTI).

This sequence belongs to the MceB microcin immunity protein family.

It is found in the cell inner membrane. Protect the producing cell against microcin E492. The protein is Microcin E492 immunity protein of Klebsiella pneumoniae.